Reading from the N-terminus, the 214-residue chain is Adenylate kinase (214 aa).

10-15 contributes to the ATP binding site; the sequence is GAGKGT. Positions 30–59 are NMP; sequence STGDMLRAAVKSGSELGKQAKDIMDAGKLV. Residues Thr-31, Arg-36, 57–59, 85–88, and Gln-92 contribute to the AMP site; these read KLV and GFPR. The interval 122-159 is LID; it reads GRRVHAPSGRVYHVKFNPPKVEGKDDVTGEELTTRKDD. Residues Arg-123 and 132-133 each bind ATP; that span reads VY. AMP is bound by residues Arg-156 and Arg-167. Lys-192 carries the post-translational modification N6-acetyllysine. Lys-200 lines the ATP pocket.

The protein belongs to the adenylate kinase family. Monomer.

It is found in the cytoplasm. The enzyme catalyses AMP + ATP = 2 ADP. The protein operates within purine metabolism; AMP biosynthesis via salvage pathway; AMP from ADP: step 1/1. Catalyzes the reversible transfer of the terminal phosphate group between ATP and AMP. Plays an important role in cellular energy homeostasis and in adenine nucleotide metabolism. The chain is Adenylate kinase from Escherichia coli O45:K1 (strain S88 / ExPEC).